The chain runs to 313 residues: Ribosomal RNA small subunit methyltransferase H (313 aa).

S-adenosyl-L-methionine contacts are provided by residues Gly-35–His-37, Asp-55, Phe-81, Asp-103, and Gln-110.

The protein belongs to the methyltransferase superfamily. RsmH family.

The protein resides in the cytoplasm. It carries out the reaction cytidine(1402) in 16S rRNA + S-adenosyl-L-methionine = N(4)-methylcytidine(1402) in 16S rRNA + S-adenosyl-L-homocysteine + H(+). Specifically methylates the N4 position of cytidine in position 1402 (C1402) of 16S rRNA. The chain is Ribosomal RNA small subunit methyltransferase H from Pseudomonas aeruginosa (strain LESB58).